Here is a 346-residue protein sequence, read N- to C-terminus: Holliday junction branch migration complex subunit RuvB (346 aa).

Residues 1–181 (MSDRNPLIDA…FGIPVRLNFY (181 aa)) are large ATPase domain (RuvB-L). ATP-binding positions include Leu-20, Arg-21, Gly-62, Lys-65, Thr-66, Thr-67, 128 to 130 (EDF), Arg-171, Tyr-181, and Arg-218. Mg(2+) is bound at residue Thr-66. The small ATPAse domain (RuvB-S) stretch occupies residues 182-252 (TVEELEYIVR…IADEALSRLE (71 aa)). The segment at 255 to 346 (NRGLDQLDRR…SQYGLFMEDE (92 aa)) is head domain (RuvB-H). DNA-binding residues include Arg-291, Arg-310, and Arg-315.

Belongs to the RuvB family. In terms of assembly, homohexamer. Forms an RuvA(8)-RuvB(12)-Holliday junction (HJ) complex. HJ DNA is sandwiched between 2 RuvA tetramers; dsDNA enters through RuvA and exits via RuvB. An RuvB hexamer assembles on each DNA strand where it exits the tetramer. Each RuvB hexamer is contacted by two RuvA subunits (via domain III) on 2 adjacent RuvB subunits; this complex drives branch migration. In the full resolvosome a probable DNA-RuvA(4)-RuvB(12)-RuvC(2) complex forms which resolves the HJ.

The protein resides in the cytoplasm. It catalyses the reaction ATP + H2O = ADP + phosphate + H(+). Functionally, the RuvA-RuvB-RuvC complex processes Holliday junction (HJ) DNA during genetic recombination and DNA repair, while the RuvA-RuvB complex plays an important role in the rescue of blocked DNA replication forks via replication fork reversal (RFR). RuvA specifically binds to HJ cruciform DNA, conferring on it an open structure. The RuvB hexamer acts as an ATP-dependent pump, pulling dsDNA into and through the RuvAB complex. RuvB forms 2 homohexamers on either side of HJ DNA bound by 1 or 2 RuvA tetramers; 4 subunits per hexamer contact DNA at a time. Coordinated motions by a converter formed by DNA-disengaged RuvB subunits stimulates ATP hydrolysis and nucleotide exchange. Immobilization of the converter enables RuvB to convert the ATP-contained energy into a lever motion, pulling 2 nucleotides of DNA out of the RuvA tetramer per ATP hydrolyzed, thus driving DNA branch migration. The RuvB motors rotate together with the DNA substrate, which together with the progressing nucleotide cycle form the mechanistic basis for DNA recombination by continuous HJ branch migration. Branch migration allows RuvC to scan DNA until it finds its consensus sequence, where it cleaves and resolves cruciform DNA. The chain is Holliday junction branch migration complex subunit RuvB from Brucella melitensis biotype 2 (strain ATCC 23457).